Here is a 93-residue protein sequence, read N- to C-terminus: Putative transmembrane protein ORF25 (93 aa).

A run of 3 helical transmembrane segments spans residues 1–21 (MAGI…NVNA), 22–42 (FLVL…YASI), and 60–80 (LWIF…VMSL).

It is found in the host membrane. The polypeptide is Putative transmembrane protein ORF25 (His1 virus (isolate Australia/Victoria) (His1V)).